Consider the following 185-residue polypeptide: Ribosome-recycling factor (185 aa).

Belongs to the RRF family.

The protein resides in the cytoplasm. Its function is as follows. Responsible for the release of ribosomes from messenger RNA at the termination of protein biosynthesis. May increase the efficiency of translation by recycling ribosomes from one round of translation to another. The chain is Ribosome-recycling factor from Halothermothrix orenii (strain H 168 / OCM 544 / DSM 9562).